A 132-amino-acid polypeptide reads, in one-letter code: MYLDPIAELITKINNGRKAHKAEVSFATSKLKTAILELLVKEGYIKSYDIRPTENNKSETVVKLKYKNQTTSSINGFKQISKPGLRIYSTHLNLPKVLNGLGIAIITTSKGVMSDKQARKENVGGEVIAYVW.

This sequence belongs to the universal ribosomal protein uS8 family. As to quaternary structure, part of the 30S ribosomal subunit. Contacts proteins S5 and S12.

In terms of biological role, one of the primary rRNA binding proteins, it binds directly to 16S rRNA central domain where it helps coordinate assembly of the platform of the 30S subunit. The polypeptide is Small ribosomal subunit protein uS8 (Ureaplasma urealyticum serovar 10 (strain ATCC 33699 / Western)).